The following is a 135-amino-acid chain: Lymphocyte antigen 6 complex locus protein G6d (135 aa).

A signal peptide spans 1 to 19 (MNSQLVGILLSALLGVALG). Residues 22–121 (TRCYDCGGGP…ASSVTPLCIL (100 aa)) enclose the UPAR/Ly6 domain. Disulfide bonds link C24–C48, C27–C35, C42–C76, C82–C101, and C102–C107. T68 carries O-linked (GalNAc...) threonine glycosylation. A lipid anchor (GPI-anchor amidated asparagine) is attached at N108. Residues 109–135 (SAVASSVTPLCILAAAVTTLAWLLPGL) constitute a propeptide, removed in mature form.

As to quaternary structure, homodimer. Post-translationally, O-glycosylated. In terms of tissue distribution, expressed in embryonic tissue and adult lung, kidney, brain, liver and spleen.

The protein localises to the cell membrane. The protein resides in the cell projection. Its subcellular location is the filopodium. This chain is Lymphocyte antigen 6 complex locus protein G6d (Ly6g6d), found in Mus musculus (Mouse).